We begin with the raw amino-acid sequence, 501 residues long: ATP-dependent rRNA helicase RRP3 (501 aa).

Residues 3–44 are a coiled coil; the sequence is KIVKRKEKKANDELTSLAEKIRAKALENQKKLIEAEKEGGSE. The disordered stretch occupies residues 36-79; sequence EAEKEGGSESDSEEDATAEKKKVLKSKSKSTVSTQNENTNEDES. Phosphoserine occurs at positions 43, 45, and 47. Positions 81–109 match the Q motif motif; the sequence is ESFSELNLVPELIQACKNLNYSKPTPIQS. The region spanning 112–284 is the Helicase ATP-binding domain; that stretch reads IPPALEGHDI…RASLTNPVKC (173 aa). Position 125–132 (125–132) interacts with ATP; that stretch reads AQTGSGKT. Residues 231–234 carry the DEAD box motif; that stretch reads DEAD. The Helicase C-terminal domain occupies 307 to 461; that stretch reads LKNTYLIYLL…NIILTLRDSV (155 aa). A disordered region spans residues 480 to 501; that stretch reads IARGKGRRGRMMTRENMDMGER. Residues 491–501 are compositionally biased toward basic and acidic residues; sequence MTRENMDMGER.

Belongs to the DEAD box helicase family. DDX47/RRP3 subfamily. In terms of assembly, interacts with the SSU processome.

The protein resides in the nucleus. It catalyses the reaction ATP + H2O = ADP + phosphate + H(+). ATPase activity is stimulated upon the addition of RNA. Its function is as follows. ATP-dependent rRNA helicase required for pre-ribosomal RNA processing. Involved in the maturation of the 35S-pre-rRNA and to its cleavage to mature 18S rRNA. The protein is ATP-dependent rRNA helicase RRP3 of Saccharomyces cerevisiae (strain ATCC 204508 / S288c) (Baker's yeast).